The chain runs to 204 residues: MDSMKDKIRQALVELDIQATEEQIEQWLEYLKLLEKWNKVYNMTAIKKIDDMLVKHLFDSLAVAKYIKGSSTVDVGTGGGLPGVVLAILYPQHQFTLVDSVGKKIMFLKNVKKSLGLDNINPLNIRIENLNGSFDNIISRAFSSVDTFYELCKHFLTKDNQMLAMKGPDLEEQNLVSLPLDIEKHSIKVPFLNAERNLIVMRKK.

Residues Gly-76, Leu-81, 127-128, and Arg-140 each bind S-adenosyl-L-methionine; that span reads IE.

This sequence belongs to the methyltransferase superfamily. RNA methyltransferase RsmG family.

It localises to the cytoplasm. The enzyme catalyses guanosine(527) in 16S rRNA + S-adenosyl-L-methionine = N(7)-methylguanosine(527) in 16S rRNA + S-adenosyl-L-homocysteine. Its function is as follows. Specifically methylates the N7 position of guanine in position 527 of 16S rRNA. This is Ribosomal RNA small subunit methyltransferase G from Francisella philomiragia subsp. philomiragia (strain ATCC 25017 / CCUG 19701 / FSC 153 / O#319-036).